The chain runs to 608 residues: uncharacterized protein (608 aa).

A helical membrane pass occupies residues L4–D24.

To M.jannaschii MJ1394 and A.fulgidus AF2028.

Its subcellular location is the membrane. This is an uncharacterized protein from Methanocaldococcus jannaschii (strain ATCC 43067 / DSM 2661 / JAL-1 / JCM 10045 / NBRC 100440) (Methanococcus jannaschii).